Here is a 145-residue protein sequence, read N- to C-terminus: Transcription antitermination protein NusB (145 aa).

The protein belongs to the NusB family.

Involved in transcription antitermination. Required for transcription of ribosomal RNA (rRNA) genes. Binds specifically to the boxA antiterminator sequence of the ribosomal RNA (rrn) operons. The sequence is that of Transcription antitermination protein NusB from Geotalea uraniireducens (strain Rf4) (Geobacter uraniireducens).